We begin with the raw amino-acid sequence, 217 residues long: Coiled-coil domain-containing protein 124-A (217 aa).

The disordered stretch occupies residues 1-128; it reads MPKKFQGENT…HLEMPLEENV (128 aa). Basic and acidic residues-rich tracts occupy residues 18-45, 52-74, and 95-128; these read RKAEAKAVSDGKRQKEIEDAYWQDDDKH, RKEDKEKKRLEQLERKKESQRLL, and TRAEIEETLCKEEEHKATTEKPKTHLEMPLEENV. Residues 46–82 are a coiled coil; the sequence is VARKGQRKEDKEKKRLEQLERKKESQRLLDEEDSKMK.

This sequence belongs to the CCDC124 family. As to quaternary structure, associates with translationally inactive ribosomes in the nonrotated state.

The protein resides in the cytoplasm. It is found in the cytoskeleton. Its subcellular location is the microtubule organizing center. The protein localises to the centrosome. It localises to the midbody. In terms of biological role, ribosome-binding protein involved in ribosome hibernation: associates with translationally inactive ribosomes and stabilizes the nonrotated conformation of the 80S ribosome, thereby promoting ribosome preservation and storage. This Xenopus laevis (African clawed frog) protein is Coiled-coil domain-containing protein 124-A (ccdc124-a).